The primary structure comprises 102 residues: Crustacean hyperglycemic hormones 3 (102 aa).

The signal sequence occupies residues 1 to 22; sequence MIALRLIAVTLVVAMAASTTWA. Disulfide bonds link Cys35–Cys71, Cys51–Cys67, and Cys54–Cys80. Val100 bears the Valine amide mark.

Belongs to the arthropod CHH/MIH/GIH/VIH hormone family.

It localises to the secreted. Its function is as follows. Hormone found in the sinus gland of isopods and decapods which controls the blood sugar level. Has a secretagogue action over the amylase released from the midgut gland. May act as a stress hormone and may be involved in the control of molting and reproduction. The protein is Crustacean hyperglycemic hormones 3 (CHH3) of Penaeus monodon (Giant tiger prawn).